The primary structure comprises 258 residues: Imidazole glycerol phosphate synthase subunit HisF (258 aa).

Residues Asp11 and Asp130 contribute to the active site.

It belongs to the HisA/HisF family. In terms of assembly, heterodimer of HisH and HisF.

It is found in the cytoplasm. It carries out the reaction 5-[(5-phospho-1-deoxy-D-ribulos-1-ylimino)methylamino]-1-(5-phospho-beta-D-ribosyl)imidazole-4-carboxamide + L-glutamine = D-erythro-1-(imidazol-4-yl)glycerol 3-phosphate + 5-amino-1-(5-phospho-beta-D-ribosyl)imidazole-4-carboxamide + L-glutamate + H(+). It functions in the pathway amino-acid biosynthesis; L-histidine biosynthesis; L-histidine from 5-phospho-alpha-D-ribose 1-diphosphate: step 5/9. Functionally, IGPS catalyzes the conversion of PRFAR and glutamine to IGP, AICAR and glutamate. The HisF subunit catalyzes the cyclization activity that produces IGP and AICAR from PRFAR using the ammonia provided by the HisH subunit. The chain is Imidazole glycerol phosphate synthase subunit HisF from Xanthomonas axonopodis pv. citri (strain 306).